Consider the following 179-residue polypeptide: Large ribosomal subunit protein uL6 (179 aa).

It belongs to the universal ribosomal protein uL6 family. Part of the 50S ribosomal subunit.

Its function is as follows. This protein binds to the 23S rRNA, and is important in its secondary structure. It is located near the subunit interface in the base of the L7/L12 stalk, and near the tRNA binding site of the peptidyltransferase center. The protein is Large ribosomal subunit protein uL6 of Akkermansia muciniphila (strain ATCC BAA-835 / DSM 22959 / JCM 33894 / BCRC 81048 / CCUG 64013 / CIP 107961 / Muc).